Consider the following 442-residue polypeptide: Probable glycine dehydrogenase (decarboxylating) subunit 1 (442 aa).

The protein belongs to the GcvP family. N-terminal subunit subfamily. The glycine cleavage system is composed of four proteins: P, T, L and H. In this organism, the P 'protein' is a heterodimer of two subunits.

It carries out the reaction N(6)-[(R)-lipoyl]-L-lysyl-[glycine-cleavage complex H protein] + glycine + H(+) = N(6)-[(R)-S(8)-aminomethyldihydrolipoyl]-L-lysyl-[glycine-cleavage complex H protein] + CO2. Its function is as follows. The glycine cleavage system catalyzes the degradation of glycine. The P protein binds the alpha-amino group of glycine through its pyridoxal phosphate cofactor; CO(2) is released and the remaining methylamine moiety is then transferred to the lipoamide cofactor of the H protein. In Phenylobacterium zucineum (strain HLK1), this protein is Probable glycine dehydrogenase (decarboxylating) subunit 1.